The following is a 423-amino-acid chain: tRNA(Ile)-lysidine synthase (423 aa).

43 to 48 (SSGVDS) is a binding site for ATP.

The protein belongs to the tRNA(Ile)-lysidine synthase family.

Its subcellular location is the cytoplasm. The catalysed reaction is cytidine(34) in tRNA(Ile2) + L-lysine + ATP = lysidine(34) in tRNA(Ile2) + AMP + diphosphate + H(+). Its function is as follows. Ligates lysine onto the cytidine present at position 34 of the AUA codon-specific tRNA(Ile) that contains the anticodon CAU, in an ATP-dependent manner. Cytidine is converted to lysidine, thus changing the amino acid specificity of the tRNA from methionine to isoleucine. In Helicobacter hepaticus (strain ATCC 51449 / 3B1), this protein is tRNA(Ile)-lysidine synthase.